The following is a 296-amino-acid chain: Phosphoribosylaminoimidazole-succinocarboxamide synthase (296 aa).

Belongs to the SAICAR synthetase family.

The catalysed reaction is 5-amino-1-(5-phospho-D-ribosyl)imidazole-4-carboxylate + L-aspartate + ATP = (2S)-2-[5-amino-1-(5-phospho-beta-D-ribosyl)imidazole-4-carboxamido]succinate + ADP + phosphate + 2 H(+). It participates in purine metabolism; IMP biosynthesis via de novo pathway; 5-amino-1-(5-phospho-D-ribosyl)imidazole-4-carboxamide from 5-amino-1-(5-phospho-D-ribosyl)imidazole-4-carboxylate: step 1/2. The polypeptide is Phosphoribosylaminoimidazole-succinocarboxamide synthase (Geobacter sulfurreducens (strain ATCC 51573 / DSM 12127 / PCA)).